The sequence spans 430 residues: tRNA(Ile)-lysidine synthase (430 aa).

24 to 29 is an ATP binding site; sequence SGGLDS.

Belongs to the tRNA(Ile)-lysidine synthase family.

The protein localises to the cytoplasm. The enzyme catalyses cytidine(34) in tRNA(Ile2) + L-lysine + ATP = lysidine(34) in tRNA(Ile2) + AMP + diphosphate + H(+). Ligates lysine onto the cytidine present at position 34 of the AUA codon-specific tRNA(Ile) that contains the anticodon CAU, in an ATP-dependent manner. Cytidine is converted to lysidine, thus changing the amino acid specificity of the tRNA from methionine to isoleucine. The sequence is that of tRNA(Ile)-lysidine synthase from Haemophilus influenzae (strain PittEE).